We begin with the raw amino-acid sequence, 531 residues long: MLGFLSRGPSMKLCMGLACVLSLWNTVSGIKGEAKKEKGMTFLPTTVSGLREEERKEKGVAFLATTELPARSIDLSALNLTELVNGMLSRALKDSKKFFSLLSVTSYSSFAFHKFSVAVYNISNLKTVDPAKFPTRYCYCLNNRTNDLSDFTALLVDIIGNSTSYLTEIFKSTSILSVNQSNESDCIFICVMTGKSGRNLSDFWEIEEKYPIINYTFTSGLSGVLGAATRGTARTSKPTTKSQKTLPSTSPGHWTQSTPWASALRSSPWTETAAPSETEETLNTGRPPELPARATATWFSASHTLPALATRRVARTQWLTADRQTWASISSVPWAQTISEKKPGGSLWETRSSPPTTAGTEEAMNTTSLLAPAAEIMATPGSPSQASPTLGAFTHGTQTPSPTKATAPRYPQTGDLSAEWPFTAGEEPVLVPRPHQVSRCPQPLFKVGAMAAAPLTLAIQRLNPCLMELCQFFQQCLCMSQRSPRTEDMRYCLEYYSWFLKNATYICQRVKRVSHSHTLKQKCLENICKSV.

The first 29 residues, 1 to 29 (MLGFLSRGPSMKLCMGLACVLSLWNTVSG), serve as a signal peptide directing secretion. N-linked (GlcNAc...) asparagine glycosylation is found at Asn-79, Asn-143, and Asn-161. Disordered regions lie at residues 231–289 (GTAR…RPPE) and 340–362 (EKKP…GTEE). Polar residues-rich tracts occupy residues 232-269 (TART…SSPW) and 349-362 (ETRS…GTEE).

The protein resides in the secreted. This is HERV-H LTR-associating protein 1 (HHLA1) from Homo sapiens (Human).